A 174-amino-acid chain; its full sequence is Endoribonuclease YbeY (174 aa).

Zn(2+)-binding residues include H129, H133, and H139.

Belongs to the endoribonuclease YbeY family. Zn(2+) serves as cofactor.

It localises to the cytoplasm. Functionally, single strand-specific metallo-endoribonuclease involved in late-stage 70S ribosome quality control and in maturation of the 3' terminus of the 16S rRNA. The chain is Endoribonuclease YbeY from Lactobacillus acidophilus (strain ATCC 700396 / NCK56 / N2 / NCFM).